Consider the following 189-residue polypeptide: uncharacterized protein (189 aa).

The N-terminal stretch at 1–23 is a signal peptide; sequence MVPPKPALWALLLALLGTAPSRA. The N-linked (GlcNAc...) asparagine glycan is linked to N72.

This is an uncharacterized protein from Homo sapiens (Human).